Consider the following 148-residue polypeptide: MTKALLIYLVSSFLALNQASLISRCDLAQVLQLEDLDGFEGYSLSDWLCLAFVESKFNISKINENADGSFDYGLFQINSHYWCNDYKSYSENLCHVDCQDLLNPNLLAGIHCAKRIVSGARGMNNWVEWRLHCSGRPLFYWLTGCRLR.

A signal peptide spans 1–19; it reads MTKALLIYLVSSFLALNQA. A C-type lysozyme domain is found at 20-148; it reads SLISRCDLAQ…FYWLTGCRLR (129 aa). Disulfide bonds link Cys25/Cys145, Cys49/Cys133, Cys83/Cys98, and Cys94/Cys112. Catalysis depends on residues Glu54 and Asp71.

This sequence belongs to the glycosyl hydrolase 22 family. Monomer. As to expression, expressed in testis, epididymis and spermatozoa (at protein level). Expressed in late-stage spermatocytes and round spermatids.

It localises to the secreted. The protein resides in the cell surface. The protein localises to the cell projection. Its subcellular location is the cilium. It is found in the flagellum. It catalyses the reaction Hydrolysis of (1-&gt;4)-beta-linkages between N-acetylmuramic acid and N-acetyl-D-glucosamine residues in a peptidoglycan and between N-acetyl-D-glucosamine residues in chitodextrins.. In terms of biological role, may be involved sperm-egg plasma membrane adhesion and fusion during fertilization. Exhibits bacteriolytic activity in vitro against Micrococcus luteus and Staphylococcus aureus. Shows weak bacteriolytic activity against Gram-positive bacteria at physiological pH. Bacteriolytic activity is pH-dependent, with a maximum at around pH 5.6. The chain is Lysozyme-like protein 6 (LYZL6) from Homo sapiens (Human).